The following is a 234-amino-acid chain: 2,3-bisphosphoglycerate-dependent phosphoglycerate mutase (234 aa).

Substrate is bound by residues 10–17 (RHGSSIWN), 23–24 (TG), R62, 89–92 (ERHY), K100, 116–117 (RR), and 186–187 (GN). H11 acts as the Tele-phosphohistidine intermediate in catalysis. E89 (proton donor/acceptor) is an active-site residue.

This sequence belongs to the phosphoglycerate mutase family. BPG-dependent PGAM subfamily. In terms of assembly, homodimer.

It carries out the reaction (2R)-2-phosphoglycerate = (2R)-3-phosphoglycerate. It functions in the pathway carbohydrate degradation; glycolysis; pyruvate from D-glyceraldehyde 3-phosphate: step 3/5. Its function is as follows. Catalyzes the interconversion of 2-phosphoglycerate and 3-phosphoglycerate. The sequence is that of 2,3-bisphosphoglycerate-dependent phosphoglycerate mutase from Wigglesworthia glossinidia brevipalpis.